An 88-amino-acid chain; its full sequence is Three-finger toxin 3FTx-2 (88 aa).

A signal peptide spans 1–21; the sequence is MKTLLLTLVVVTIVCLDLGNT. Cystine bridges form between Cys-27–Cys-48, Cys-41–Cys-66, Cys-70–Cys-81, and Cys-82–Cys-87.

Belongs to the three-finger toxin family. Ancestral subfamily. Orphan group II sub-subfamily. Expressed by the venom gland.

Its subcellular location is the secreted. Its function is as follows. Binds with low affinity to muscular (alpha-1-beta-1-delta-epsilon/CHRNA1-CHRNB1-CHRND-CHRNE) and very low affinity to neuronal (alpha-7/CHRNA7) nicotinic acetylcholine receptor (nAChR). The polypeptide is Three-finger toxin 3FTx-2 (Micrurus corallinus (Brazilian coral snake)).